The sequence spans 707 residues: Ribosomal RNA large subunit methyltransferase K/L (707 aa).

In terms of domain architecture, THUMP spans 44-155 (VIYNLCLWSR…NDILTVSFDL (112 aa)).

The protein belongs to the methyltransferase superfamily. RlmKL family.

It is found in the cytoplasm. The enzyme catalyses guanosine(2445) in 23S rRNA + S-adenosyl-L-methionine = N(2)-methylguanosine(2445) in 23S rRNA + S-adenosyl-L-homocysteine + H(+). The catalysed reaction is guanosine(2069) in 23S rRNA + S-adenosyl-L-methionine = N(2)-methylguanosine(2069) in 23S rRNA + S-adenosyl-L-homocysteine + H(+). In terms of biological role, specifically methylates the guanine in position 2445 (m2G2445) and the guanine in position 2069 (m7G2069) of 23S rRNA. This is Ribosomal RNA large subunit methyltransferase K/L from Legionella pneumophila (strain Corby).